A 682-amino-acid polypeptide reads, in one-letter code: Zinc finger protein 16 (682 aa).

Residues 1–10 (MPSLRTRREE) show a composition bias toward basic and acidic residues. The segment at 1–38 (MPSLRTRREEAEMELSAPGPSPWTPAAQARVSDAPAVT) is disordered. Residues 62-210 (YQQPDCDTRT…GVPTAESPLI (149 aa)) are necessary for transcription activation. The C2H2-type 1; degenerate zinc finger occupies 209–231 (LICNECGKTFRGNPDLIQRQIVH). A C2H2-type 2; degenerate zinc finger spans residues 237–259 (FMCDDCGKTFSQNSVLKNRHRSH). Residue Lys-253 forms a Glycyl lysine isopeptide (Lys-Gly) (interchain with G-Cter in SUMO2) linkage. C2H2-type zinc fingers lie at residues 265–287 (YQCSECGKAFRGHSDFSRHQSHH), 293–315 (YTCTECGKAFSQNSSLKKHQKSH), 321–343 (YECNECGKAFRRSSNLIQHQRIH), 349–371 (YVCSECGKAFRRSSNLIKHHRTH), 377–399 (FECGECGKAFSQSAHLRKHQRVH), 405–427 (YECNDCGKPFSRVSNLIKHHRVH), 433–455 (YKCSDCGKXFSQSSSLIQHRRIH), and 461–483 (HVCNVCGKAFSYSSVLRKHQIIH). 2 required for nuclear localization regions span residues 268–393 (SECG…AHLR) and 341–373 (RIHSGEKPYVCSECGKAFRRSSNLIKHHRTHTG). The tract at residues 473 to 503 (SSVLRKHQIIHTGEKPYRCSVCGKAFSHSSA) is required for nuclear localization. Position 487 is an N6-acetyllysine (Lys-487). 7 consecutive C2H2-type zinc fingers follow at residues 489 to 511 (YRCSVCGKAFSHSSALIQHQGVH), 517 to 539 (YACHECGKTFGRSSNLILHQRVH), 545 to 567 (YECTECGKTFSQSSTLIQHQRIH), 573 to 595 (HECNQCGKAFNRSSNLIHHQKVH), 601 to 623 (YTCVECGKGFSQSSHLIQHQIIH), 629 to 651 (YKCSECGKAFSQRSVLIQHQRIH), and 657 to 679 (YDCAACGKAFSQRSKLIKHQLIH).

The protein belongs to the krueppel C2H2-type zinc-finger protein family. In terms of assembly, interacts with INCA1; the interaction inhibits INCA1 activity and induces the cell cycle process.

The protein localises to the nucleus. Functionally, acts as a transcriptional activator. Promotes cell proliferation by facilitating the cell cycle phase transition from the S to G2/M phase. Involved in both the hemin- and phorbol myristate acetate (PMA)-induced erythroid and megakaryocytic differentiation, respectively. Also plays a role as an inhibitor of cell apoptosis. The sequence is that of Zinc finger protein 16 (ZNF16) from Pan troglodytes (Chimpanzee).